The following is a 188-amino-acid chain: Large ribosomal subunit protein bL35m (188 aa).

It belongs to the bacterial ribosomal protein bL35 family.

It localises to the mitochondrion. The chain is Large ribosomal subunit protein bL35m (MRPL35) from Pongo abelii (Sumatran orangutan).